Here is a 460-residue protein sequence, read N- to C-terminus: MAGWSILELLRSNPEALKEHVRKRLMDPAIVDRAYRLDVEWRRLLTMVNEVRRRHNEITRMIAKAGSREERERLIAEAKRLLREREDLEEKLKKVEREREEALLGLPNIVAPDVPVGDESATRPIEFWGKPKVWKGHVDAFREQTEAYGFKVDHEVIEWRPRGHADMMEEVLKLGDTLRAARVAGSRFYYLFEDLVFLDLALLMYAIDFMTSKGYVLVLPPYMLRYNVMSRVIDLETFKDAIYEIAGEDLYLIATAEHPLAALYYNSEIYDEDLPLKLVGVSPCFRKEAGAGNRDLKGIFRVHQFHKVEQFVYSLPEESSKLHEELISNAKEIFKGLEIPFRVVNIASGDLGACAVKKYDLEAWMPAQGKYREMVSASNCTDWQAYRLGIRLVRRKGMERGYVHTLNATAVASTRTITAILENFQDEEGVVAIPRALRRYLEVFKRAPTDAIHPRRRPPA.

255-257 (TAE) is an L-serine binding site. ATP contacts are provided by residues 286 to 288 (RKE) and Val-302. Glu-309 contributes to the L-serine binding site. Residue 373-376 (EMVS) participates in ATP binding. Thr-409 lines the L-serine pocket.

It belongs to the class-II aminoacyl-tRNA synthetase family. Type-1 seryl-tRNA synthetase subfamily. In terms of assembly, homodimer. The tRNA molecule binds across the dimer.

The protein localises to the cytoplasm. It catalyses the reaction tRNA(Ser) + L-serine + ATP = L-seryl-tRNA(Ser) + AMP + diphosphate + H(+). The catalysed reaction is tRNA(Sec) + L-serine + ATP = L-seryl-tRNA(Sec) + AMP + diphosphate + H(+). It functions in the pathway aminoacyl-tRNA biosynthesis; selenocysteinyl-tRNA(Sec) biosynthesis; L-seryl-tRNA(Sec) from L-serine and tRNA(Sec): step 1/1. In terms of biological role, catalyzes the attachment of serine to tRNA(Ser). Is also able to aminoacylate tRNA(Sec) with serine, to form the misacylated tRNA L-seryl-tRNA(Sec), which will be further converted into selenocysteinyl-tRNA(Sec). In Aeropyrum pernix (strain ATCC 700893 / DSM 11879 / JCM 9820 / NBRC 100138 / K1), this protein is Serine--tRNA ligase.